We begin with the raw amino-acid sequence, 995 residues long: DNA repair protein Rev1 (995 aa).

One can recognise a BRCT domain in the interval 35–121; the sequence is RKSDLFQGIS…KIVDYKPYLL (87 aa). Disordered regions lie at residues 135–164 and 182–211; these read GKPKDNGANESKSDVEPPKDKAEVEVDSTK and VATSPEKEASASESKITNLSTTSNNSTTAR. Residues 136–164 show a composition bias toward basic and acidic residues; it reads KPKDNGANESKSDVEPPKDKAEVEVDSTK. Positions 192-211 are enriched in low complexity; that stretch reads ASESKITNLSTTSNNSTTAR. The UmuC domain occupies 275 to 505; it reads VMHIDMDCFF…MSLDLLPGVG (231 aa). Asp-279 serves as a coordination point for Mg(2+). DCTP is bound by residues 361 to 367, Asn-373, and Asp-421; that span reads SCSYEAR. Asp-421 lines the Mg(2+) pocket. Glu-422 is an active-site residue. The interval 696-868 is interaction with PolI; that stretch reads SEMRKDKPIP…HYIRSDQIVA (173 aa). The interaction with PolH/DNApol-eta stretch occupies residues 878–995; the sequence is VNPHILKLIS…IEYIRCIKCS (118 aa).

This sequence belongs to the DNA polymerase type-Y family. Interacts (via C-terminus) with PolH/DNApol-eta (via C-terminal regions). Interacts (via C-terminus) with PolI. Mg(2+) serves as cofactor.

The protein resides in the nucleus. Its function is as follows. Deoxycytidyl transferase involved in DNA repair. Transfers a dCMP residue from dCTP to the 3'-end of a DNA primer in a template-dependent reaction. May assist in the first step in the bypass of abasic lesions by the insertion of a nucleotide opposite the lesion. Required for normal induction of mutations by physical and chemical agents. During homologous recombination (HR) repair of DNA double-strand breaks (DSBs) regulates the extent of repair synthesis. Possibly recruits the DNA polymerase zeta complex or another translesion polymerase to early DSB repair intermediates to initiate repair synthesis, while also blocking the access of more processive polymerases preventing them from acting during the initial stages of HR repair. The protein is DNA repair protein Rev1 of Drosophila melanogaster (Fruit fly).